Here is a 675-residue protein sequence, read N- to C-terminus: Protein C-mannosyl-transferase DPY19L1 (675 aa).

Residues 1 to 22 (MEGRPPPEGRPPPRPRTGRAPR) form a disordered region. The next 11 membrane-spanning stretches (helical) occupy residues 66–88 (LYYS…WMIM), 156–176 (ACFY…LFFI), 186–208 (LGGL…VMWT), 236–254 (LYRG…FMLP), 260–279 (FVLL…GYID), 286–303 (IIYI…LMFG), 309–325 (TSYY…ILAM), 334–354 (VSEL…TVIL), 414–434 (VVLV…WGVL), 449–469 (GELV…ILIM), and 491–511 (LFGW…ILAA).

Belongs to the dpy-19 family. In terms of tissue distribution, widely expressed.

Its subcellular location is the endoplasmic reticulum membrane. It carries out the reaction L-tryptophyl-[protein] + a di-trans,poly-cis-dolichyl beta-D-mannosyl phosphate = C-alpha-D-mannosyl-L-tryptophyl-[protein] + a di-trans,poly-cis-dolichyl phosphate + H(+). Its pathway is protein modification; protein glycosylation. C-mannosyltransferase that mediates the C-mannosylation tryptophan residues on target proteins. The reaction occurs on the luminal side of the endoplasmic reticulum and involves the transfer of a mannose unit from a dolichylphosphate mannose (Dol-P-Man) donor to an acceptor protein containing a WxxW consensus sequence. C-mannosylates the first two tryptophans in the WxxWxxWxxC motif in thrombospondin (TSP) type-1 of UNC5A. Regulates neurite extension during development. This chain is Protein C-mannosyl-transferase DPY19L1 (DPY19L1), found in Homo sapiens (Human).